The sequence spans 461 residues: Porin AaxA (461 aa).

The signal sequence occupies residues 1–22; that stretch reads MSFRSVLLTALLSLSFTTTMQA.

Belongs to the OprB family.

The protein localises to the cell outer membrane. Functionally, facilitates L-arginine uptake, as part of the AaxABC system. The arginine uptake by the bacterium in the macrophage may be a virulence factor against the host innate immune response. The polypeptide is Porin AaxA (aaxA) (Chlamydia trachomatis serovar A (strain ATCC VR-571B / DSM 19440 / HAR-13)).